The primary structure comprises 227 residues: Cytochrome c oxidase subunit 2 (227 aa).

Over 1–14 the chain is Mitochondrial intermembrane; sequence MAHPVQLGLQDATS. A helical membrane pass occupies residues 15–45; the sequence is PVMEELITFHDYALMTISLISFLVLYALFST. The Mitochondrial matrix segment spans residues 46–59; that stretch reads LTTKLTNTNITDAQ. Residues 60-87 form a helical membrane-spanning segment; it reads EMETTWTILPAVILILIALPSLRILYLT. At 88 to 227 the chain is on the mitochondrial intermembrane side; the sequence is DEINNPSFTI…IFEMGPVFTL (140 aa). Cu cation is bound by residues histidine 161, cysteine 196, glutamate 198, cysteine 200, histidine 204, and methionine 207. Residue glutamate 198 coordinates Mg(2+).

It belongs to the cytochrome c oxidase subunit 2 family. Component of the cytochrome c oxidase (complex IV, CIV), a multisubunit enzyme composed of 14 subunits. The complex is composed of a catalytic core of 3 subunits MT-CO1, MT-CO2 and MT-CO3, encoded in the mitochondrial DNA, and 11 supernumerary subunits COX4I, COX5A, COX5B, COX6A, COX6B, COX6C, COX7A, COX7B, COX7C, COX8 and NDUFA4, which are encoded in the nuclear genome. The complex exists as a monomer or a dimer and forms supercomplexes (SCs) in the inner mitochondrial membrane with NADH-ubiquinone oxidoreductase (complex I, CI) and ubiquinol-cytochrome c oxidoreductase (cytochrome b-c1 complex, complex III, CIII), resulting in different assemblies (supercomplex SCI(1)III(2)IV(1) and megacomplex MCI(2)III(2)IV(2)). Found in a complex with TMEM177, COA6, COX18, COX20, SCO1 and SCO2. Interacts with TMEM177 in a COX20-dependent manner. Interacts with COX20. Interacts with COX16. The cofactor is Cu cation.

The protein resides in the mitochondrion inner membrane. The catalysed reaction is 4 Fe(II)-[cytochrome c] + O2 + 8 H(+)(in) = 4 Fe(III)-[cytochrome c] + 2 H2O + 4 H(+)(out). In terms of biological role, component of the cytochrome c oxidase, the last enzyme in the mitochondrial electron transport chain which drives oxidative phosphorylation. The respiratory chain contains 3 multisubunit complexes succinate dehydrogenase (complex II, CII), ubiquinol-cytochrome c oxidoreductase (cytochrome b-c1 complex, complex III, CIII) and cytochrome c oxidase (complex IV, CIV), that cooperate to transfer electrons derived from NADH and succinate to molecular oxygen, creating an electrochemical gradient over the inner membrane that drives transmembrane transport and the ATP synthase. Cytochrome c oxidase is the component of the respiratory chain that catalyzes the reduction of oxygen to water. Electrons originating from reduced cytochrome c in the intermembrane space (IMS) are transferred via the dinuclear copper A center (CU(A)) of subunit 2 and heme A of subunit 1 to the active site in subunit 1, a binuclear center (BNC) formed by heme A3 and copper B (CU(B)). The BNC reduces molecular oxygen to 2 water molecules using 4 electrons from cytochrome c in the IMS and 4 protons from the mitochondrial matrix. The sequence is that of Cytochrome c oxidase subunit 2 (MT-CO2) from Chlorocebus aethiops (Green monkey).